The following is a 437-amino-acid chain: Probable peptidoglycan-N-acetylglucosamine deacetylase ARB_03699 (437 aa).

An N-terminal signal peptide occupies residues 1–20 (MLMRLYTFFAAALLACCAAA). Positions 47 to 132 (STRAATTTTT…STSAAAPSTP (86 aa)) are disordered. An N-linked (GlcNAc...) asparagine glycan is attached at asparagine 99. In terms of domain architecture, NodB homology spans 149–334 (GTVAITFDDG…EVKRRGLKAV (186 aa)). Aspartate 156 acts as the Proton acceptor in catalysis. Residues aspartate 157, histidine 209, and histidine 213 each contribute to the Zn(2+) site. Residue tyrosine 251 participates in substrate binding. Histidine 308 functions as the Proton donor in the catalytic mechanism. Over residues 350–370 (TTPVQVPTGTSTTSPTATPTS) the composition is skewed to low complexity. The tract at residues 350-384 (TTPVQVPTGTSTTSPTATPTSPGTPPPAPTQPGVA) is disordered. A LysM domain is found at 389–435 (KWHTVVSGDTCYDIAAANGISLDNLYKWNPAVGTSCASLWLGYAVCV).

Requires Zn(2+) as cofactor. Co(2+) is required as a cofactor.

It localises to the secreted. It carries out the reaction peptidoglycan-N-acetyl-D-glucosamine + H2O = peptidoglycan-D-glucosamine + acetate.. Catalyzes the deacetylation of N-acetylglucosamine (GlcNAc) residues in peptidoglycan. This chain is Probable peptidoglycan-N-acetylglucosamine deacetylase ARB_03699, found in Arthroderma benhamiae (strain ATCC MYA-4681 / CBS 112371) (Trichophyton mentagrophytes).